A 250-amino-acid polypeptide reads, in one-letter code: MSQAAETLDGWYSLHLFYAVDWASLRLVPKDERDALVTEFQSFLENTATVRSSKSGDQAIYNITGQKADLLLWFLRPEMKSLNHIENEFNKLRIADFLIPTYSYVSVIELSNYLAGKSDEDPYENPHIKARLYPELPHSDYICFYPMNKRRNETYNWYMLTMEERQKLMYDHGMIGRKYAGKIKQFITGSVGFDDFEWGVTLFSDDVLQFKKIVYEMRFDETTARYGEFGSFFVGHLINTNEFDQFFAIS.

Residues Arg-131, 145 to 149, His-172, and Gln-185 each bind Fe-coproporphyrin III; that span reads YPMNK. Residue Tyr-145 is part of the active site.

It belongs to the ChdC family. Type 1 subfamily. The cofactor is Fe-coproporphyrin III.

It catalyses the reaction Fe-coproporphyrin III + 2 H2O2 + 2 H(+) = heme b + 2 CO2 + 4 H2O. The catalysed reaction is Fe-coproporphyrin III + H2O2 + H(+) = harderoheme III + CO2 + 2 H2O. The enzyme catalyses harderoheme III + H2O2 + H(+) = heme b + CO2 + 2 H2O. It functions in the pathway porphyrin-containing compound metabolism; protoheme biosynthesis. Its function is as follows. Involved in coproporphyrin-dependent heme b biosynthesis. Catalyzes the decarboxylation of Fe-coproporphyrin III (coproheme) to heme b (protoheme IX), the last step of the pathway. The reaction occurs in a stepwise manner with a three-propionate intermediate. This chain is Coproheme decarboxylase, found in Staphylococcus aureus (strain MSSA476).